The primary structure comprises 210 residues: Phosphoheptose isomerase (210 aa).

The SIS domain maps to 38–202 (IAACLARGGK…ENVAALAPYL (165 aa)). 53–55 (NGG) provides a ligand contact to substrate. The Zn(2+) site is built by His62 and Glu66. Substrate is bound by residues Glu66, 95 to 96 (ND), 121 to 123 (STS), Ser126, and Gln173. The Zn(2+) site is built by Gln173 and His181.

The protein belongs to the SIS family. GmhA subfamily. Homotetramer. Zn(2+) is required as a cofactor.

It localises to the cytoplasm. The catalysed reaction is 2 D-sedoheptulose 7-phosphate = D-glycero-alpha-D-manno-heptose 7-phosphate + D-glycero-beta-D-manno-heptose 7-phosphate. It functions in the pathway carbohydrate biosynthesis; D-glycero-D-manno-heptose 7-phosphate biosynthesis; D-glycero-alpha-D-manno-heptose 7-phosphate and D-glycero-beta-D-manno-heptose 7-phosphate from sedoheptulose 7-phosphate: step 1/1. Its function is as follows. Catalyzes the isomerization of sedoheptulose 7-phosphate in D-glycero-D-manno-heptose 7-phosphate. In Desulfovibrio desulfuricans (strain ATCC 27774 / DSM 6949 / MB), this protein is Phosphoheptose isomerase.